Reading from the N-terminus, the 123-residue chain is MKKEEIIQAIKEMTVLELNELVEACEEEFGVSAAAPVAVAGAGAAAGAGAAEEKTEFDVVLADAGSEKIKVIKAVREVTGLGLKEAKALVDGAPKTLKEAASKEDGEAIKAKLEEVGAKVELK.

This sequence belongs to the bacterial ribosomal protein bL12 family. In terms of assembly, homodimer. Part of the ribosomal stalk of the 50S ribosomal subunit. Forms a multimeric L10(L12)X complex, where L10 forms an elongated spine to which 2 to 4 L12 dimers bind in a sequential fashion. Binds GTP-bound translation factors.

Its function is as follows. Forms part of the ribosomal stalk which helps the ribosome interact with GTP-bound translation factors. Is thus essential for accurate translation. This chain is Large ribosomal subunit protein bL12, found in Clostridium botulinum (strain ATCC 19397 / Type A).